A 227-amino-acid chain; its full sequence is Small ribosomal subunit protein uS3 (227 aa).

Residues 39–107 (VRQLLQKRLK…PVHITIEEVR (69 aa)) form the KH type-2 domain.

Belongs to the universal ribosomal protein uS3 family. As to quaternary structure, part of the 30S ribosomal subunit. Forms a tight complex with proteins S10 and S14.

Binds the lower part of the 30S subunit head. Binds mRNA in the 70S ribosome, positioning it for translation. This Coxiella burnetii (strain RSA 493 / Nine Mile phase I) protein is Small ribosomal subunit protein uS3 (rpsC).